Here is a 273-residue protein sequence, read N- to C-terminus: 4-hydroxy-tetrahydrodipicolinate reductase (273 aa).

12–17 lines the NAD(+) pocket; it reads GAAGRM. Arginine 39 serves as a coordination point for NADP(+). NAD(+) contacts are provided by residues 102 to 104 and 126 to 129; these read GTT and AANF. The Proton donor/acceptor role is filled by histidine 159. Histidine 160 is a (S)-2,3,4,5-tetrahydrodipicolinate binding site. Lysine 163 functions as the Proton donor in the catalytic mechanism. A (S)-2,3,4,5-tetrahydrodipicolinate-binding site is contributed by 169 to 170; the sequence is GT.

This sequence belongs to the DapB family. Homotetramer.

It localises to the cytoplasm. The enzyme catalyses (S)-2,3,4,5-tetrahydrodipicolinate + NAD(+) + H2O = (2S,4S)-4-hydroxy-2,3,4,5-tetrahydrodipicolinate + NADH + H(+). It carries out the reaction (S)-2,3,4,5-tetrahydrodipicolinate + NADP(+) + H2O = (2S,4S)-4-hydroxy-2,3,4,5-tetrahydrodipicolinate + NADPH + H(+). The protein operates within amino-acid biosynthesis; L-lysine biosynthesis via DAP pathway; (S)-tetrahydrodipicolinate from L-aspartate: step 4/4. Catalyzes the conversion of 4-hydroxy-tetrahydrodipicolinate (HTPA) to tetrahydrodipicolinate. This Erwinia tasmaniensis (strain DSM 17950 / CFBP 7177 / CIP 109463 / NCPPB 4357 / Et1/99) protein is 4-hydroxy-tetrahydrodipicolinate reductase.